The sequence spans 382 residues: GTPase Obg (382 aa).

The Obg domain maps to 2–161; that stretch reads VKFADESKIR…REIIVELNII (160 aa). One can recognise an OBG-type G domain in the interval 162–328; the sequence is ADIGLVGFPN…VKKAFIRLAD (167 aa). GTP is bound by residues 168 to 175, 193 to 197, 215 to 218, 282 to 285, and 309 to 311; these read GFPNAGKS, FTTKI, DIPG, TKLD, and SLY. Mg(2+) is bound by residues Ser175 and Thr195. The disordered stretch occupies residues 360 to 382; it reads EEKNDDEHFGATVSLSRKRKPKK.

Belongs to the TRAFAC class OBG-HflX-like GTPase superfamily. OBG GTPase family. In terms of assembly, monomer. Requires Mg(2+) as cofactor.

It localises to the cytoplasm. Functionally, an essential GTPase which binds GTP, GDP and possibly (p)ppGpp with moderate affinity, with high nucleotide exchange rates and a fairly low GTP hydrolysis rate. Plays a role in control of the cell cycle, stress response, ribosome biogenesis and in those bacteria that undergo differentiation, in morphogenesis control. In Treponema denticola (strain ATCC 35405 / DSM 14222 / CIP 103919 / JCM 8153 / KCTC 15104), this protein is GTPase Obg.